The sequence spans 352 residues: S-norcoclaurine synthase 1 (352 aa).

The region spanning 200–304 (KPLRTVFNRE…RLSIAAFHDP (105 aa)) is the Fe2OG dioxygenase domain. 3 residues coordinate Fe cation: His-228, Asp-230, and His-285.

This sequence belongs to the iron/ascorbate-dependent oxidoreductase family. Monomer. It depends on Fe cation as a cofactor.

It carries out the reaction (4-hydroxyphenyl)acetaldehyde + dopamine = (S)-norcoclaurine + H2O. With respect to regulation, inhibited by O-phenanthroline, but not by EDTA. Functionally, involved in the biosynthesis of the common precursor of all benzylisoquinoline alkaloids such as morphine, sanguinarine, codeine or berberine. Condenses dopamine and phenylacetaldehyde, 3,4-dihydrophenylacetaldehyde or 4-hydroxyphenylacetaldehyde. This chain is S-norcoclaurine synthase 1 (NCS1), found in Coptis japonica (Japanese goldthread).